We begin with the raw amino-acid sequence, 55 residues long: Large ribosomal subunit protein bL33 (55 aa).

This sequence belongs to the bacterial ribosomal protein bL33 family.

In Sphingopyxis alaskensis (strain DSM 13593 / LMG 18877 / RB2256) (Sphingomonas alaskensis), this protein is Large ribosomal subunit protein bL33.